The primary structure comprises 309 residues: MLDRLWEVRQALPLYLLVSTLGLAISCCFTLICPHVCRLIPALTTYGKAADQQEDNSLVEKISVPKKWFKHFYAIGLLTLFICLHTVHSLIYNPNYLHPVVLKILATLTRSYSIPPITPSTSILALLLISLHVARRLYETIFVSVYSDSRMNLFHYAVGIVHYIILPISIMCETQGVASKLPQLHVSIDDISLTQWAGAVLFWICNWKQHQLAEQIANTRKGPRGLIRNYAYGICFGGWFNLVSCPHFLFEICIYLSLFLVIPDAYVYRFIIMFVCINQTFAALITHSWYHKTFPKYPKSRKALIPYVL.

7 consecutive transmembrane segments (helical) span residues 12 to 32, 72 to 92, 114 to 134, 151 to 171, 184 to 204, 242 to 262, and 270 to 290; these read LPLY…FTLI, FYAI…SLIY, IPPI…LHVA, MNLF…ISIM, LHVS…LFWI, LVSC…FLVI, and FIIM…HSWY.

The protein belongs to the steroid 5-alpha reductase family. Polyprenal reductase subfamily.

It is found in the endoplasmic reticulum membrane. The catalysed reaction is a di-trans,poly-cis-dolichal + NADP(+) = a di-trans,poly-cis-polyprenal + NADPH + H(+). The protein operates within protein modification; protein glycosylation. Functionally, plays a key role in early steps of protein N-linked glycosylation by being involved in the conversion of polyprenol into dolichol. Acts as a polyprenal reductase that mediates the reduction of polyprenal into dolichal in a NADP-dependent mechanism. Dolichols are required for the synthesis of dolichol-linked monosaccharides and the oligosaccharide precursor used for N-glycosylation. The polypeptide is Polyprenal reductase (Caenorhabditis elegans).